We begin with the raw amino-acid sequence, 678 residues long: Endopolyphosphatase (678 aa).

At 1 to 2 (MR) the chain is on the cytoplasmic side. A helical; Signal-anchor for type II membrane protein membrane pass occupies residues 3-23 (SPLLASLFALALSIASSEAAI). The Vacuolar segment spans residues 24-678 (SSTEQVPLSG…ELMLVSTETD (655 aa)). A disordered region spans residues 70–109 (YKTGSTFDSGCHRKPKKDGKSEGKKATENERGNEDLDDKE). Residues 87 to 103 (DGKSEGKKATENERGNE) show a composition bias toward basic and acidic residues. 3 N-linked (GlcNAc...) asparagine glycosylation sites follow: Asn138, Asn369, and Asn447. The tract at residues 504 to 547 (KGSGGHRHDVPKGDCSLPSNEDKPHCTFKRKPRHYSKRSPSRTN) is disordered. Positions 529 to 543 (CTFKRKPRHYSKRSP) are enriched in basic residues. 2 N-linked (GlcNAc...) asparagine glycosylation sites follow: Asn591 and Asn616.

The protein belongs to the endopolyphosphatase PPN1 family. It depends on a divalent metal cation as a cofactor. In terms of processing, processing by proteases in the vacuole may be required for activation.

It localises to the vacuole membrane. The enzyme catalyses [phosphate](n+1) + n H2O = (n+1) phosphate + n H(+). Functionally, catalyzes the hydrolysis of inorganic polyphosphate (polyP) chains of many hundreds of phosphate residues into shorter lengths. The sequence is that of Endopolyphosphatase (PPN1) from Cryptococcus neoformans var. neoformans serotype D (strain JEC21 / ATCC MYA-565) (Filobasidiella neoformans).